The sequence spans 46 residues: MGYDSRLDHLAATSWYPFFNNVTTRGEIIEPYSLTLDEACQFLKIS.

In terms of biological role, may be involved in H(2) production during fermentative growth. The polypeptide is Protein YpdJ (ypdJ) (Escherichia coli (strain K12)).